The sequence spans 807 residues: 85/88 kDa calcium-independent phospholipase A2 (807 aa).

At Ser-13 the chain carries Phosphoserine. ANK repeat units follow at residues 120–147 (WTVTHLAVELGIRECFHHSRIISCANST), 151–181 (EGCTPLHLACRKGDSEILVELVQYCHAQMDV), 185–215 (KGETAFHYAVQGDNPQVLQLLGKNASAGLNQ), 219–248 (QGLTPLHLACKMGKQEMVRVLLLCNARCNI), 251–281 (PGGFPIHTAMKFSQKGCAEMIISMDSNQIHS), 286–312 (YGASPLHWAKNAEMARMLLKRGCDVDS), 316–345 (SGNTALHVAVMRNRFDCVMVLLTYGANAGA), 349–378 (HGNTPLHLAMSKDNMEMVKALIVFGAEVDT), and 382–403 (FGETPALIASKISKLITRKALL). 2 consecutive transmembrane segments (helical) span residues 481–501 (LLCLDGGGVKGLVIIQLLIAI) and 512–532 (LFDWVAGTSTGGILALAILHS). In terms of domain architecture, PNPLA spans 482–666 (LCLDGGGVKG…LANNPTLDAM (185 aa)). A GXGXXG motif is present at residues 486 to 491 (GGGVKG). Residues 518–522 (GTSTG) carry the GXSXG motif. The active-site Nucleophile is the Ser-520. The Proton acceptor role is filled by Asp-653. The short motif at 653–655 (DGG) is the DGA/G element. Residues 678–687 (RKGQGNKVKK) are calmodulin-binding (1-9-14 motif). The segment at 749-760 (AWCEMVGIQYFR) is calmodulin-binding (IQ motif).

In terms of assembly, homodimer formed by catalytic domains tightly interacting through a large hydrophobic interface. The contact area involves 3 alpha helices, several loops and a part of the beta sheet from each monomer. Both active sites of the dimer are in close proximity adopting an open conformation that provide sufficient space for phospholipid access and favoring cooperativity in deacylation-reacylation reactions. Each monomer has 9 ankyrin repeats stacked side-by-side in an elongated structure oriented outwards from the catalytic core. Expressed in neurons of central and peripheral nervous system. Highly expressed in Purkinje cells in cerebellum and dorsal and ventral horn neurons in the spinal cord. Expressed in testis (at protein level). Expressed in skeletal muscle (at protein level).

Its subcellular location is the cytoplasm. It is found in the cell membrane. It localises to the mitochondrion. The protein localises to the cell projection. The protein resides in the pseudopodium. The catalysed reaction is a 1,2-diacyl-sn-glycero-3-phosphocholine + H2O = a 1-acyl-sn-glycero-3-phosphocholine + a fatty acid + H(+). The enzyme catalyses a 1-O-alkyl-2-acyl-sn-glycero-3-phosphocholine + H2O = a 1-O-alkyl-sn-glycero-3-phosphocholine + a fatty acid + H(+). It carries out the reaction 1,2-dihexadecanoyl-sn-glycero-3-phosphocholine + H2O = 1-hexadecanoyl-sn-glycero-3-phosphocholine + hexadecanoate + H(+). It catalyses the reaction 1-hexadecanoyl-2-(9Z-octadecenoyl)-sn-glycero-3-phosphocholine + H2O = 1-hexadecanoyl-sn-glycero-3-phosphocholine + (9Z)-octadecenoate + H(+). The catalysed reaction is 1-hexadecanoyl-2-(9Z,12Z-octadecadienoyl)-sn-glycero-3-phosphocholine + H2O = (9Z,12Z)-octadecadienoate + 1-hexadecanoyl-sn-glycero-3-phosphocholine + H(+). The enzyme catalyses 1-hexadecanoyl-2-(5Z,8Z,11Z,14Z-eicosatetraenoyl)-sn-glycero-3-phosphocholine + H2O = 1-hexadecanoyl-sn-glycero-3-phosphocholine + (5Z,8Z,11Z,14Z)-eicosatetraenoate + H(+). It carries out the reaction 1-octadecanoyl-2-(5Z,8Z,11Z,14Z-eicosatetraenoyl)-sn-glycero-3-phosphocholine + H2O = 1-octadecanoyl-sn-glycero-3-phosphocholine + (5Z,8Z,11Z,14Z)-eicosatetraenoate + H(+). It catalyses the reaction 1-hexadecanoyl-2-(5Z,8Z,11Z,14Z-eicosatetraenoyl)-sn-glycero-3-phosphoethanolamine + H2O = 1-hexadecanoyl-sn-glycero-3-phosphoethanolamine + (5Z,8Z,11Z,14Z)-eicosatetraenoate + H(+). The catalysed reaction is 1,2-dihexadecanoyl-sn-glycero-3-phosphate + H2O = 1-hexadecanoyl-sn-glycero-3-phosphate + hexadecanoate + H(+). The enzyme catalyses a 1-acyl-sn-glycero-3-phosphocholine + H2O = sn-glycerol 3-phosphocholine + a fatty acid + H(+). It carries out the reaction 1-hexadecanoyl-sn-glycero-3-phosphocholine + H2O = sn-glycerol 3-phosphocholine + hexadecanoate + H(+). It catalyses the reaction 1-(5Z,8Z,11Z,14Z-eicosatetraenoyl)-sn-glycero-3-phosphocholine + H2O = sn-glycerol 3-phosphocholine + (5Z,8Z,11Z,14Z)-eicosatetraenoate + H(+). The catalysed reaction is 2-(5Z,8Z,11Z,14Z)-eicosatetraenoyl-sn-glycero-3-phosphocholine + H2O = sn-glycerol 3-phosphocholine + (5Z,8Z,11Z,14Z)-eicosatetraenoate + H(+). The enzyme catalyses 1-O-hexadecyl-2-(5Z,8Z,11Z,14Z)-eicosatetraenoyl-sn-glycero-3-phosphocholine + H2O = 1-O-hexadecyl-sn-glycero-3-phosphocholine + (5Z,8Z,11Z,14Z)-eicosatetraenoate + H(+). It carries out the reaction 1-O-hexadecyl-2-acetyl-sn-glycero-3-phosphocholine + H2O = 1-O-hexadecyl-sn-glycero-3-phosphocholine + acetate + H(+). It catalyses the reaction hexadecanoyl-CoA + H2O = hexadecanoate + CoA + H(+). The catalysed reaction is 1',3'-bis[1,2-di-(9Z-octadecenoyl)-sn-glycero-3-phospho]-glycerol + H2O = 1'-[1,2-di-(9Z-octadecenoyl)-sn-glycero-3-phospho]-3'-[1-(9Z-octadecenoyl)-sn-glycero-3-phospho]-glycerol + (9Z)-octadecenoate + H(+). The enzyme catalyses 1'-[1,2-di-(9Z-octadecenoyl)-sn-glycero-3-phospho]-3'-[1-(9Z-octadecenoyl)-sn-glycero-3-phospho]-glycerol + H2O = 1',3'-bis-[1-(9Z-octadecenoyl)-sn-glycero-3-phospho]-glycerol + (9Z)-octadecenoate + H(+). It carries out the reaction 1',3'-bis-[1,2-di-(9Z,12Z-octadecadienoyl)-sn-glycero-3-phospho]-glycerol + H2O = 1'-[1,2-di-(9Z,12Z-octadecadienoyl)-sn-glycero-3-phospho]-3'-[1-(9Z,12Z-octadecadienoyl)-sn-glycero-3-phospho]-glycerol + (9Z,12Z)-octadecadienoate + H(+). It catalyses the reaction 1-octadecanoyl-2-(15-hydroxy-(5Z,8Z,11Z,13E)-eicosatetraenoyl)-sn-glycero-3-phosphoethanolamine + H2O = 1-octadecanoyl-sn-glycero-3-phosphoethanolamine + 15-hydroxy-(5Z,8Z,11Z,13E)-eicosatetraenoate + H(+). With respect to regulation, inhibited by calcium-activated calmodulin. Activated by ATP. Inhibited by bromoenol lactone (BEL). Functionally, calcium-independent phospholipase involved in phospholipid remodeling with implications in cellular membrane homeostasis, mitochondrial integrity and signal transduction. Hydrolyzes the ester bond of the fatty acyl group attached at sn-1 or sn-2 position of phospholipids (phospholipase A1 and A2 activity respectively), producing lysophospholipids that are used in deacylation-reacylation cycles. Hydrolyzes both saturated and unsaturated long fatty acyl chains in various glycerophospholipid classes such as phosphatidylcholines, phosphatidylethanolamines and phosphatidates, with a preference for hydrolysis at sn-2 position. Can further hydrolyze lysophospholipids carrying saturated fatty acyl chains (lysophospholipase activity). Upon oxidative stress, contributes to remodeling of mitochondrial phospholipids in pancreatic beta cells, in a repair mechanism to reduce oxidized lipid content. Preferentially hydrolyzes oxidized polyunsaturated fatty acyl chains from cardiolipins, yielding monolysocardiolipins that can be reacylated with unoxidized fatty acyls to regenerate native cardiolipin species. Hydrolyzes oxidized glycerophosphoethanolamines present in pancreatic islets, releasing oxidized polyunsaturated fatty acids such as hydroxyeicosatetraenoates (HETEs). Has thioesterase activity toward fatty-acyl CoA releasing CoA-SH known to facilitate fatty acid transport and beta-oxidation in mitochondria particularly in skeletal muscle. Plays a role in regulation of membrane dynamics and homeostasis. Selectively hydrolyzes sn-2 arachidonoyl group in plasmalogen phospholipids, structural components of lipid rafts and myelin. Regulates F-actin polymerization at the pseudopods, which is required for both speed and directionality of MCP1/CCL2-induced monocyte chemotaxis. Targets membrane phospholipids to produce potent lipid signaling messengers. Generates lysophosphatidate (LPA, 1-acyl-glycerol-3-phosphate), which acts via G-protein receptors in various cell types. Has phospholipase A2 activity toward platelet-activating factor (PAF, 1-O-alkyl-2-acetyl-sn-glycero-3-phosphocholine), likely playing a role in inactivation of this potent pro-inflammatory signaling lipid. In response to glucose, amplifies calcium influx in pancreatic beta cells to promote INS secretion. The chain is 85/88 kDa calcium-independent phospholipase A2 (Pla2g6) from Mus musculus (Mouse).